The following is a 433-amino-acid chain: Phosphomethylpyrimidine synthase 2 (433 aa).

Substrate-binding positions include N66, M94, Y123, H162, 184–186 (SRG), 225–228 (DALR), and E264. H268 provides a ligand contact to Zn(2+). Residue Y291 coordinates substrate. Residue H332 coordinates Zn(2+). Residues C408, C411, and C415 each contribute to the [4Fe-4S] cluster site.

The protein belongs to the ThiC family. The cofactor is [4Fe-4S] cluster.

It catalyses the reaction 5-amino-1-(5-phospho-beta-D-ribosyl)imidazole + S-adenosyl-L-methionine = 4-amino-2-methyl-5-(phosphooxymethyl)pyrimidine + CO + 5'-deoxyadenosine + formate + L-methionine + 3 H(+). Its pathway is cofactor biosynthesis; thiamine diphosphate biosynthesis. Functionally, catalyzes the synthesis of the hydroxymethylpyrimidine phosphate (HMP-P) moiety of thiamine from aminoimidazole ribotide (AIR) in a radical S-adenosyl-L-methionine (SAM)-dependent reaction. This is Phosphomethylpyrimidine synthase 2 from Saccharolobus solfataricus (strain ATCC 35092 / DSM 1617 / JCM 11322 / P2) (Sulfolobus solfataricus).